The sequence spans 466 residues: Ribulose bisphosphate carboxylase large chain (466 aa).

Lys-4 bears the N6,N6,N6-trimethyllysine mark. 2 residues coordinate substrate: Asn-113 and Thr-163. The active-site Proton acceptor is Lys-165. Lys-167 is a binding site for substrate. Mg(2+) contacts are provided by Lys-191, Asp-193, and Glu-194. Lys-191 bears the N6-carboxylysine mark. Catalysis depends on His-284, which acts as the Proton acceptor. Substrate is bound by residues Arg-285, His-317, and Ser-369.

This sequence belongs to the RuBisCO large chain family. Type I subfamily. In terms of assembly, heterohexadecamer of 8 large chains and 8 small chains; disulfide-linked. The disulfide link is formed within the large subunit homodimers. Mg(2+) serves as cofactor. Post-translationally, the disulfide bond which can form in the large chain dimeric partners within the hexadecamer appears to be associated with oxidative stress and protein turnover.

The protein localises to the plastid. The protein resides in the chloroplast. It carries out the reaction 2 (2R)-3-phosphoglycerate + 2 H(+) = D-ribulose 1,5-bisphosphate + CO2 + H2O. The enzyme catalyses D-ribulose 1,5-bisphosphate + O2 = 2-phosphoglycolate + (2R)-3-phosphoglycerate + 2 H(+). In terms of biological role, ruBisCO catalyzes two reactions: the carboxylation of D-ribulose 1,5-bisphosphate, the primary event in carbon dioxide fixation, as well as the oxidative fragmentation of the pentose substrate in the photorespiration process. Both reactions occur simultaneously and in competition at the same active site. The sequence is that of Ribulose bisphosphate carboxylase large chain from Drimys winteri (Winter's bark).